A 1654-amino-acid chain; its full sequence is MTTSNVELIPIYTDWANRHLSKGSLSKSIRDISNDFRDYRLVSQLINVIVPINEFSPAFTKRLAKITSNLDGLETCLDYLKNLGLDCSKLTKTDIDSGNLGAVLQLLFLLSTYKQKLRQLKKDQKKLEQLPTSIMPPAVSKLPSPRVATSATASATNPNSNFPQMSTSRLQTPQSRISKIDSSKIGIKPKTSGLKPPSSSTTSSNNTNSFRPSSRSSGNNNVGSTISTSAKSLESSSTYSSISNLNRPTSQLQKPSRPQTQLVRVATTTKIGSSKLAAPKAVSTPKLASVKTIGAKQEPDNSGGGGGGMLKLKLFSSKNPSSSSNSPQPTRKAAAVPQQQTLSKIAAPVKSGLKPPTSKLGSATSMSKLCTPKVSYRKTDAPIISQQDSKRCSKSSEEESGYAGFNSTSPTSSSTEGSLSMHSTSSKSSTSDEKSPSSDDLTLNASIVTAIRQPIAATPVSPNIINKPVEEKPTLAVKGVKSTAKKDPPPAVPPRDTQPTIGVVSPIMAHKKLTNDPVISEKPEPEKLQSMSIDTTDVPPLPPLKSVVPLKMTSIRQPPTYDVLLKQGKITSPVKSFGYEQSSASEDSIVAHASAQVTPPTKTSGNHSLERRMGKNKTSESSGYTSDAGVAMCAKMREKLKEYDDMTRRAQNGYPDNFEDSSSLSSGISDNNELDDISTDDLSGVDMATVASKHSDYSHFVRHPTSSSSKPRVPSRSSTSVDSRSRAEQENVYKLLSQCRTSQRGAAATSTFGQHSLRSPGYSSYSPHLSVSADKDTMSMHSQTSRRPSSQKPSYSGQFHSLDRKCHLQEFTSTEHRMAALLSPRRVPNSMSKYDSSAAALNASGMSRSMILLESLSPRPPRRHQSPADSCIITASPSAPRRSHSPRGPTARIPLSLASSPVHVNNNWGSYSARSRGGSSTGIYGETFQLHRLSDEKSPAHSAKSEMGSQLSLASTTAYGSLNEKYEHAIRDMARDLECYKNTVDSLTKKQENYGALFDLFEQKLRKLTQHIDRSNLKPEEAIRFRQDIAHLRDISNHLASNSAHANEGAGELLRQPSLESVASHRSSMSSSSKSSKQEKISLSSFGKNKKSWIRSSLSKFTKKKNKNYDEAHMPSISGSQGTLDNIDVIELKQELKERDSALYEVRLDNLDRAREVDVLRETVNKLKTENKQLKKEVDKLTNGPATRASSRASIPVIYDDEHVYDAACSSTSASQSSKRSSGCNSIKVTVNVDIAGEISSIVNPDKEIIVGYLAMPTSQSCWKDIDVSILGLFEVYLSRIDVEHQLGIDARDSILGYQIGELRRVIGDSTTMITSHPTDILTSSTTIRMFMHGAAQSRVDSLVLDMLLPKQMILQLVKSILTERRLVLAGATGIGKSKLAKTLAAYVSIRTNQSEDSIVNISIPENNKEELLQVERRLEKILRSKESCIVILDNIPKNRIAFVVSVFANVPLQNNEGPFVVCTVNRYQIPELQIHHNFKMSVMSNRLEGFILRYLRRRAVEDEYRLTVQMPSELFKIIDFFPIALQAVNNFIEKTNSVDVTVGPRACLNCPLTVDGSREWFIRLWNENFIPYLERVARDGKKTFGRCTSFEDPTDIVSEKWPWFDGENPENVLKRLQLQDLVPSPANSSRQHFNPLESLIQLHATKHQTIDNI.

The region spanning 6 to 115 (VELIPIYTDW…LLFLLSTYKQ (110 aa)) is the Calponin-homology (CH) domain. Disordered stretches follow at residues 128–261 (EQLP…PQTQ), 274–364 (SKLA…GSAT), 381–440 (APII…SSDD), 480–501 (VKST…QPTI), 595–626 (AQVT…GYTS), 650–680 (AQNG…ISTD), 698–729 (SHFV…RAEQ), and 747–799 (AATS…SGQF). Over residues 143-161 (PSPRVATSATASATNPNSN) the composition is skewed to low complexity. Over residues 162–174 (FPQMSTSRLQTPQ) the composition is skewed to polar residues. The span at 197–243 (PSSSTTSSNNTNSFRPSSRSSGNNNVGSTISTSAKSLESSSTYSSIS) shows a compositional bias: low complexity. Over residues 244 to 261 (NLNRPTSQLQKPSRPQTQ) the composition is skewed to polar residues. Positions 310-327 (LKLKLFSSKNPSSSSNSP) are enriched in low complexity. Residues 388 to 397 (DSKRCSKSSE) show a composition bias toward basic and acidic residues. Over residues 407–429 (STSPTSSSTEGSLSMHSTSSKSS) the composition is skewed to low complexity. The span at 595–607 (AQVTPPTKTSGNH) shows a compositional bias: polar residues. A compositionally biased stretch (low complexity) spans 705-722 (TSSSSKPRVPSRSSTSVD). Polar residues-rich tracts occupy residues 747 to 769 (AATS…SPHL) and 779 to 799 (SMHS…SGQF). Positions 962–994 (LNEKYEHAIRDMARDLECYKNTVDSLTKKQENY) form a coiled coil. Positions 1059-1083 (LESVASHRSSMSSSSKSSKQEKISL) are disordered. A compositionally biased stretch (low complexity) spans 1061-1083 (SVASHRSSMSSSSKSSKQEKISL). Residues 1152 to 1184 (DRAREVDVLRETVNKLKTENKQLKKEVDKLTNG) adopt a coiled-coil conformation.

Belongs to the Nav/unc-53 family. As to quaternary structure, interacts with sem-5. Interacts with cmd-1 in the presence of Ca(2+).

Involved in the migration and outgrowth of muscles, axons and excretory canals. In Caenorhabditis elegans, this protein is Adapter protein unc-53 (unc-53).